A 147-amino-acid polypeptide reads, in one-letter code: Protein phosphatase 1 regulatory subunit 14A (147 aa).

Basic residues predominate over residues 1-11 (MAAQRLGKRVL). The disordered stretch occupies residues 1-37 (MAAQRLGKRVLSKLQSPSRARGPGGSPGGLQKRHARV). A Phosphoserine modification is found at Ser26. An inhibitory region spans residues 35–120 (ARVTVKYDRR…LLAKLQGLHR (86 aa)). Thr38 carries the phosphothreonine; by PKC modification. The disordered stretch occupies residues 118–147 (LHRQPGLRQPSPSHDGSLSPLQDRARTAHP). Over residues 127–137 (PSPSHDGSLSP) the composition is skewed to polar residues. Phosphoserine occurs at positions 128, 134, and 136.

The protein belongs to the PP1 inhibitor family. Isoform 1 is detected in aorta and testis. Isoform 2 is detected in aorta.

The protein resides in the cytoplasm. Functionally, inhibitor of PPP1CA. Has over 1000-fold higher inhibitory activity when phosphorylated, creating a molecular switch for regulating the phosphorylation status of PPP1CA substrates and smooth muscle contraction. This is Protein phosphatase 1 regulatory subunit 14A (PPP1R14A) from Homo sapiens (Human).